A 218-amino-acid chain; its full sequence is Large ribosomal subunit protein uL3 (218 aa).

Belongs to the universal ribosomal protein uL3 family. As to quaternary structure, part of the 50S ribosomal subunit. Forms a cluster with proteins L14 and L19.

Functionally, one of the primary rRNA binding proteins, it binds directly near the 3'-end of the 23S rRNA, where it nucleates assembly of the 50S subunit. The protein is Large ribosomal subunit protein uL3 of Corynebacterium efficiens (strain DSM 44549 / YS-314 / AJ 12310 / JCM 11189 / NBRC 100395).